Here is a 90-residue protein sequence, read N- to C-terminus: Probable Fe(2+)-trafficking protein (90 aa).

The protein belongs to the Fe(2+)-trafficking protein family.

Its function is as follows. Could be a mediator in iron transactions between iron acquisition and iron-requiring processes, such as synthesis and/or repair of Fe-S clusters in biosynthetic enzymes. The protein is Probable Fe(2+)-trafficking protein of Pseudoalteromonas atlantica (strain T6c / ATCC BAA-1087).